A 262-amino-acid polypeptide reads, in one-letter code: Abhydrolase domain-containing protein AFT2-1 (262 aa).

The short motif at 260-262 is the Peroxisomal targeting signal type 1 element; the sequence is SKL.

The protein belongs to the AB hydrolase superfamily. AKT2 hydrolase family.

The protein localises to the peroxisome. The protein operates within mycotoxin biosynthesis. Its function is as follows. Abhydrolase domain-containing protein; part of the gene clusters that mediate the biosynthesis of the host-selective toxins (HSTs) AF-toxins responsible for Alternaria black spot of strawberry disease by the strawberry pathotype. AF-toxin I and III are valine derivatives of 2,3-dyhydroxy-isovaleric acid and 2-hydroxy-isovaleric acid respectively, while AF II is an isoleucine derivative of 2-hydroxy-valeric acid. These derivatives are bound to a 9,10-epoxy-8-hydroxy-9-methyl-decatrienoic acid (EDA) moiety. On cellular level, AF-toxins affect plasma membrane of susceptible cells and cause a sudden increase in loss of K(+) after a few minutes of toxin treatment. The aldo-keto reductase AFTS1 catalyzes the conversion of 2-keto-isovaleric acid (2-KIV) to 2-hydroxy-isovaleric acid (2-HIV) by reduction of its ketone to an alcohol. The acyl-CoA ligase AFT1, the hydrolase AFT2 and the enoyl-CoA hydratases AFT3 and AFT6, but also the polyketide synthase AFT9, the acyl-CoA dehydrogenase AFT10, the cytochrome P450 monooxygenase AFT11 and the oxidoreductase AFT12 are all involved in the biosynthesis of the AK-, AF- and ACT-toxin common EDA structural moiety. The exact function of each enzyme, and of additional enzymes identified within the AF-toxin clusters have still to be determined. In Alternaria alternata (Alternaria rot fungus), this protein is Abhydrolase domain-containing protein AFT2-1.